Consider the following 402-residue polypeptide: Mitochondrial inner membrane protein OXA1 (402 aa).

A mitochondrion-targeting transit peptide spans 1-42 (MFKLTSRLVTSRFAASSRLATARTIVLPRPHPSWISFQAKRF). Residues 43–118 (NSTGPNANDV…PSDIIQHVLE (76 aa)) lie on the Mitochondrial intermembrane side of the membrane. Residues 119 to 139 (AVHVYSGLPWWGTIAATTILI) form a helical membrane-spanning segment. Over 140-199 (RCLMFPLYVKSSDTVARNSHIKPELDALNNKLMSTTDLQQGQLVAMQRKKLLSSHGIKNR) the chain is Mitochondrial matrix. Residues 200–220 (WLAAPMLQIPIALGFFNALRH) form a helical membrane-spanning segment. Residues 221–239 (MANYPVDGFANQGVAWFTD) lie on the Mitochondrial intermembrane side of the membrane. A helical membrane pass occupies residues 240 to 260 (LTQADPYLGLQVITAAVFISF). The Mitochondrial matrix segment spans residues 261–275 (TRLGGETGAQQFSSP). A helical membrane pass occupies residues 276–292 (MKRLFTILPIISIPATM). Residues 293–297 (NLSSA) are Mitochondrial intermembrane-facing. Residues 298–316 (VVLYFAFNGAFSVLQTMIL) traverse the membrane as a helical segment. Residues 317–402 (RNKWVRSKLK…HKSNFINNKK (86 aa)) lie on the Mitochondrial matrix side of the membrane. Residues 366–385 (RQLMQDNEKKLQESFKEKRQ) show a composition bias toward basic and acidic residues. A disordered region spans residues 366-386 (RQLMQDNEKKLQESFKEKRQN).

It belongs to the OXA1/ALB3/YidC family. As to quaternary structure, interacts with the large ribosome subunit of mitochondrial ribosome. Interacts directly with MRP20. Interacts with OXA1.

The protein resides in the mitochondrion inner membrane. Mitochondrial inner membrane insertase that mediates the insertion of both mitochondrion-encoded precursors and nuclear-encoded proteins from the matrix into the inner membrane. Links mitoribosomes with the inner membrane. Forms pores capable of accommodating translocating protein segments. Essential for the activity and assembly of cytochrome c oxidase. Plays a central role in the translocation and export of the N-terminal part of the COX2 protein into the mitochondrial intermembrane space. This chain is Mitochondrial inner membrane protein OXA1, found in Saccharomyces cerevisiae (strain ATCC 204508 / S288c) (Baker's yeast).